The chain runs to 371 residues: Flagellar P-ring protein (371 aa).

Residues methionine 1–alanine 24 form the signal peptide. The segment covering proline 301–lysine 321 has biased composition (polar residues). The disordered stretch occupies residues proline 301–threonine 322.

It belongs to the FlgI family. As to quaternary structure, the basal body constitutes a major portion of the flagellar organelle and consists of four rings (L,P,S, and M) mounted on a central rod.

It localises to the periplasm. It is found in the bacterial flagellum basal body. In terms of biological role, assembles around the rod to form the L-ring and probably protects the motor/basal body from shearing forces during rotation. This is Flagellar P-ring protein from Allorhizobium ampelinum (strain ATCC BAA-846 / DSM 112012 / S4) (Agrobacterium vitis (strain S4)).